The following is a 356-amino-acid chain: MPPEQGPVVLGIETSCDETGVGLVRNGTLLGEALSTSMDQHARYGGVVPEIAARAHVQALVPCVRAALSSAGLFVADIGAVAVTAGPGLATALHVGVAAAKAYATALDVPLYGVHHLAGHLAADLVDGEPLPDPLIALIVSGGHTSLLRVGDLARDPITHLGDTLDDAAGECFDKVARVLGLPYPGGPAVDRAAVGHDATALAFPRPLTGRADAPYTFSFSGLKTAVARWVESHPDSPVPAGDVIASFQEAVVDVLTAKAVRACLDHGIGDLLIVGGVAANSRLRALAASRCEQTGIRLRIPARRRCTDNGVMIAALGDLLVRAGAEPSPAELTAMPGAFLERAQLGTALPALHAA.

2 residues coordinate Fe cation: H116 and H120. Substrate is bound by residues 139–143 (IVSGG), D174, G187, D191, and N281. D309 is a binding site for Fe cation.

Belongs to the KAE1 / TsaD family. Fe(2+) is required as a cofactor.

It is found in the cytoplasm. It catalyses the reaction L-threonylcarbamoyladenylate + adenosine(37) in tRNA = N(6)-L-threonylcarbamoyladenosine(37) in tRNA + AMP + H(+). Functionally, required for the formation of a threonylcarbamoyl group on adenosine at position 37 (t(6)A37) in tRNAs that read codons beginning with adenine. Is involved in the transfer of the threonylcarbamoyl moiety of threonylcarbamoyl-AMP (TC-AMP) to the N6 group of A37, together with TsaE and TsaB. TsaD likely plays a direct catalytic role in this reaction. The sequence is that of tRNA N6-adenosine threonylcarbamoyltransferase from Frankia casuarinae (strain DSM 45818 / CECT 9043 / HFP020203 / CcI3).